The chain runs to 332 residues: 2,3-diketo-L-gulonate reductase (332 aa).

Histidine 44 acts as the Proton donor in catalysis. NAD(+) contacts are provided by residues 168 to 174, 224 to 225, and 304 to 306; these read ITMVDMS, WK, and GHE.

This sequence belongs to the LDH2/MDH2 oxidoreductase family. DlgD subfamily. In terms of assembly, homodimer.

The protein resides in the cytoplasm. It carries out the reaction 3-dehydro-L-gulonate + NAD(+) = 2,3-dioxo-L-gulonate + NADH + H(+). The catalysed reaction is 3-dehydro-L-gulonate + NADP(+) = 2,3-dioxo-L-gulonate + NADPH + H(+). In terms of biological role, catalyzes the reduction of 2,3-diketo-L-gulonate in the presence of NADH, to form 3-keto-L-gulonate. This chain is 2,3-diketo-L-gulonate reductase, found in Escherichia coli O17:K52:H18 (strain UMN026 / ExPEC).